Here is a 187-residue protein sequence, read N- to C-terminus: Protein GrpE (187 aa).

Residues 1-17 (MSNEEQQQPNPAAQAPE) show a composition bias toward low complexity. A disordered region spans residues 1–27 (MSNEEQQQPNPAAQAPEGAVTEGAAPE).

This sequence belongs to the GrpE family. In terms of assembly, homodimer.

Its subcellular location is the cytoplasm. Its function is as follows. Participates actively in the response to hyperosmotic and heat shock by preventing the aggregation of stress-denatured proteins, in association with DnaK and GrpE. It is the nucleotide exchange factor for DnaK and may function as a thermosensor. Unfolded proteins bind initially to DnaJ; upon interaction with the DnaJ-bound protein, DnaK hydrolyzes its bound ATP, resulting in the formation of a stable complex. GrpE releases ADP from DnaK; ATP binding to DnaK triggers the release of the substrate protein, thus completing the reaction cycle. Several rounds of ATP-dependent interactions between DnaJ, DnaK and GrpE are required for fully efficient folding. The polypeptide is Protein GrpE (Thioalkalivibrio sulfidiphilus (strain HL-EbGR7)).